A 137-amino-acid chain; its full sequence is Putative protein YjhV (137 aa).

Polar residues predominate over residues methionine 1–threonine 16. A disordered region spans residues methionine 1–arginine 20.

The chain is Putative protein YjhV (yjhV) from Escherichia coli (strain K12).